The following is a 235-amino-acid chain: Large ribosomal subunit protein uL1 (235 aa).

The protein belongs to the universal ribosomal protein uL1 family. As to quaternary structure, part of the 50S ribosomal subunit.

Its function is as follows. Binds directly to 23S rRNA. The L1 stalk is quite mobile in the ribosome, and is involved in E site tRNA release. In terms of biological role, protein L1 is also a translational repressor protein, it controls the translation of the L11 operon by binding to its mRNA. In Parasynechococcus marenigrum (strain WH8102), this protein is Large ribosomal subunit protein uL1.